Here is a 47-residue protein sequence, read N- to C-terminus: Delta-actitoxin-Axm1d (47 aa).

3 disulfides stabilise this stretch: Cys-4/Cys-44, Cys-6/Cys-34, and Cys-27/Cys-45.

It belongs to the sea anemone sodium channel inhibitory toxin family. Type I subfamily.

It is found in the secreted. The protein localises to the nematocyst. Functionally, binds specifically to voltage-gated sodium channels (Nav), thereby delaying their inactivation during signal transduction. Thus it strongly stimulates mammalian cardiac muscle contraction. The protein is Delta-actitoxin-Axm1d of Anthopleura xanthogrammica (Giant green sea anemone).